Reading from the N-terminus, the 89-residue chain is Small ribosomal subunit protein uS15 (89 aa).

The protein belongs to the universal ribosomal protein uS15 family. In terms of assembly, part of the 30S ribosomal subunit. Forms a bridge to the 50S subunit in the 70S ribosome, contacting the 23S rRNA.

In terms of biological role, one of the primary rRNA binding proteins, it binds directly to 16S rRNA where it helps nucleate assembly of the platform of the 30S subunit by binding and bridging several RNA helices of the 16S rRNA. Forms an intersubunit bridge (bridge B4) with the 23S rRNA of the 50S subunit in the ribosome. The chain is Small ribosomal subunit protein uS15 from Bradyrhizobium sp. (strain BTAi1 / ATCC BAA-1182).